Consider the following 216-residue polypeptide: Peptide methionine sulfoxide reductase MsrA (216 aa).

The active site involves Cys57.

The protein belongs to the MsrA Met sulfoxide reductase family.

The enzyme catalyses L-methionyl-[protein] + [thioredoxin]-disulfide + H2O = L-methionyl-(S)-S-oxide-[protein] + [thioredoxin]-dithiol. The catalysed reaction is [thioredoxin]-disulfide + L-methionine + H2O = L-methionine (S)-S-oxide + [thioredoxin]-dithiol. Has an important function as a repair enzyme for proteins that have been inactivated by oxidation. Catalyzes the reversible oxidation-reduction of methionine sulfoxide in proteins to methionine. The chain is Peptide methionine sulfoxide reductase MsrA from Agrobacterium fabrum (strain C58 / ATCC 33970) (Agrobacterium tumefaciens (strain C58)).